The chain runs to 83 residues: MLTIRLALGGSKKRPFYHLTVTDSRNPRDGSHKEQVGFFNPVARGQEIRLSVNQERVAYWLSVGAQPSERVAQLLKESAKAAA.

It belongs to the bacterial ribosomal protein bS16 family.

This is Small ribosomal subunit protein bS16 from Pseudomonas fluorescens (strain Pf0-1).